The following is a 482-amino-acid chain: [Fructose-bisphosphate aldolase]-lysine N-methyltransferase, chloroplastic (482 aa).

The N-terminal 57 residues, 1–57 (MSASVAVVSGFLRIPSIQKSQNPSFLFSRPKKSLVRPISASSSELPENVRNFWKWLR), are a transit peptide targeting the chloroplast. The SET domain occupies 59 to 282 (QGVVSGKSVA…AGEQVYIQYD (224 aa)). S-adenosyl-L-methionine contacts are provided by residues 75-77 (EGL) and Arg-217. Substrate is bound by residues Arg-217, Arg-221, and Asp-234. Residue 237 to 238 (NH) coordinates S-adenosyl-L-methionine. Tyr-249, Tyr-281, and Tyr-294 together coordinate substrate.

The protein belongs to the class V-like SAM-binding methyltransferase superfamily. Plant protein-lysine LSMT methyltransferase family.

It localises to the plastid. It is found in the chloroplast stroma. It catalyses the reaction [fructose-bisphosphate aldolase]-L-lysine + 3 S-adenosyl-L-methionine = [fructose-bisphosphate aldolase]-N(6),N(6),N(6)-trimethyl-L-lysine + 3 S-adenosyl-L-homocysteine + 3 H(+). In terms of biological role, protein-lysine methyltransferase methylating chloroplastic fructose 1,6-bisphosphate aldolases. Can also use with low efficiency gamma-tocopherol methyltransferase as substrate, but not a cytosolic aldolase. Able to interact with unmethylated Rubisco, but unlike in pea, the complex is catalytically unproductive. The protein is [Fructose-bisphosphate aldolase]-lysine N-methyltransferase, chloroplastic (LSMT-L) of Arabidopsis thaliana (Mouse-ear cress).